A 190-amino-acid chain; its full sequence is Protein hunchback (190 aa).

3 disordered regions span residues 13-59, 86-110, and 142-190; these read EPMS…SSNL, AAMT…PNPM, and QTND…KYMA. Positions 17-31 are enriched in basic residues; the sequence is HHHHHSHHHGHHHML. Positions 90-100 are enriched in polar residues; the sequence is PSPSNNDQNSP. The span at 171–190 shows a compositional bias: basic and acidic residues; that stretch reads EPEKDHDLISNSSEDMKYMA.

Belongs to the hunchback C2H2-type zinc-finger protein family.

It localises to the nucleus. In terms of biological role, gap class segmentation protein that controls development of head structures. This is Protein hunchback (hb) from Scaptomyza crassifemur (Fruit fly).